Consider the following 292-residue polypeptide: 4,5:9,10-diseco-3-hydroxy-5,9,17-trioxoandrosta-1(10),2-diene-4-oate hydrolase (292 aa).

Residues 44–45 (GG), N53, N113, and R192 contribute to the substrate site. H269 functions as the Proton acceptor in the catalytic mechanism. W270 serves as a coordination point for substrate.

This sequence belongs to the AB hydrolase superfamily. HsaD family. In terms of assembly, homodimer.

The enzyme catalyses (1E,2Z)-3-hydroxy-5,9,17-trioxo-4,5:9,10-disecoandrosta-1(10),2-dien-4-oate + H2O = 3-[(3aS,4S,7aS)-7a-methyl-1,5-dioxo-octahydro-1H-inden-4-yl]propanoate + (2Z,4Z)-2-hydroxyhexa-2,4-dienoate + H(+). The protein operates within lipid metabolism; steroid biosynthesis. Its function is as follows. Catalyzes the hydrolysis of a carbon-carbon bond in 4,5: 9,10-diseco-3-hydroxy-5,9,17-trioxoandrosta-1(10),2-diene-4-oate (4,9-DSHA) to yield 9,17-dioxo-1,2,3,4,10,19-hexanorandrostan-5-oate (DOHNAA) and 2-hydroxy-hexa-2,4-dienoate (HHD). Also involved in biphenyl and polychlorinated biphenyls (PCBs) degradation. The chain is 4,5:9,10-diseco-3-hydroxy-5,9,17-trioxoandrosta-1(10),2-diene-4-oate hydrolase (hsaD) from Rhodococcus jostii (strain RHA1).